The chain runs to 82 residues: Sec-independent protein translocase protein TatA (82 aa).

A helical membrane pass occupies residues Met-1–Gly-21. Positions Gly-43–Gly-82 are disordered.

This sequence belongs to the TatA/E family. The Tat system comprises two distinct complexes: a TatABC complex, containing multiple copies of TatA, TatB and TatC subunits, and a separate TatA complex, containing only TatA subunits. Substrates initially bind to the TatABC complex, which probably triggers association of the separate TatA complex to form the active translocon.

The protein localises to the cell inner membrane. Functionally, part of the twin-arginine translocation (Tat) system that transports large folded proteins containing a characteristic twin-arginine motif in their signal peptide across membranes. TatA could form the protein-conducting channel of the Tat system. This Methylocella silvestris (strain DSM 15510 / CIP 108128 / LMG 27833 / NCIMB 13906 / BL2) protein is Sec-independent protein translocase protein TatA.